We begin with the raw amino-acid sequence, 206 residues long: Octanoyltransferase (206 aa).

In terms of domain architecture, BPL/LPL catalytic spans 30 to 206 (PETNDEIWLV…EFVTLLNNSI (177 aa)). Substrate-binding positions include 69–76 (RGGQVTYH), 137–139 (SLG), and 150–152 (GIA). Cys168 acts as the Acyl-thioester intermediate in catalysis.

Belongs to the LipB family.

The protein resides in the cytoplasm. It catalyses the reaction octanoyl-[ACP] + L-lysyl-[protein] = N(6)-octanoyl-L-lysyl-[protein] + holo-[ACP] + H(+). The protein operates within protein modification; protein lipoylation via endogenous pathway; protein N(6)-(lipoyl)lysine from octanoyl-[acyl-carrier-protein]: step 1/2. Catalyzes the transfer of endogenously produced octanoic acid from octanoyl-acyl-carrier-protein onto the lipoyl domains of lipoate-dependent enzymes. Lipoyl-ACP can also act as a substrate although octanoyl-ACP is likely to be the physiological substrate. The sequence is that of Octanoyltransferase from Francisella tularensis subsp. holarctica (strain FTNF002-00 / FTA).